The primary structure comprises 246 residues: 1-(5-phosphoribosyl)-5-[(5-phosphoribosylamino)methylideneamino] imidazole-4-carboxamide isomerase (246 aa).

The active-site Proton acceptor is the aspartate 8. Aspartate 130 functions as the Proton donor in the catalytic mechanism.

This sequence belongs to the HisA/HisF family.

It localises to the cytoplasm. The enzyme catalyses 1-(5-phospho-beta-D-ribosyl)-5-[(5-phospho-beta-D-ribosylamino)methylideneamino]imidazole-4-carboxamide = 5-[(5-phospho-1-deoxy-D-ribulos-1-ylimino)methylamino]-1-(5-phospho-beta-D-ribosyl)imidazole-4-carboxamide. Its pathway is amino-acid biosynthesis; L-histidine biosynthesis; L-histidine from 5-phospho-alpha-D-ribose 1-diphosphate: step 4/9. This is 1-(5-phosphoribosyl)-5-[(5-phosphoribosylamino)methylideneamino] imidazole-4-carboxamide isomerase from Hydrogenovibrio crunogenus (strain DSM 25203 / XCL-2) (Thiomicrospira crunogena).